A 174-amino-acid polypeptide reads, in one-letter code: Small ribosomal subunit protein uS7c (174 aa).

This sequence belongs to the universal ribosomal protein uS7 family. In terms of assembly, part of the 30S ribosomal subunit.

Its subcellular location is the plastid. It localises to the chloroplast. Its function is as follows. One of the primary rRNA binding proteins, it binds directly to 16S rRNA where it nucleates assembly of the head domain of the 30S subunit. This is Small ribosomal subunit protein uS7c (rps7) from Stigeoclonium helveticum (Green alga).